The chain runs to 443 residues: MPKIFRSLYVQVIIAIVLGILVGALFPKFGEALKPLGDIFVKLIKMVIAPIIFATVVSGVAHMRDTRKVGRVGGKALIYFEVVSTLALIIGMVVMNVLRPGAGMNVDPATLDTAGLTKYTEAAGEMTVWDHILKIIPDTLVSAFTGGELLPVLLVALLFGFALMRLGKLGDQILYGIDALNQVVFVILGFIMRLAPIGAFGAMAFTVGKYGLKSLTSLGYLMGSFYLTCLLFIFVVLGLIARAAGFSIFKLIRYIREELLIVLGTSSSESALPRLMMKLEHAGAEKSVVGLVVPTGYSFNLDGTSIYLTMAALFIAQATNTPLGLGEQLSLLAVLLLTSKGAAGVTGSGFITLAATLGAVGHVPVAGMALILGIDRFMSEARALTNFIGNAVATLVVARSENAVDMNRLTRALNGEDLPTTEPDVASEERGEGREIDSSRPVT.

Helical transmembrane passes span 7 to 26 (SLYV…GALF), 46 to 63 (MVIA…VAHM), 76 to 98 (ALIY…MNVL), 140 to 162 (LVSA…FGFA), 183 to 205 (VVFV…AMAF), 218 to 240 (LGYL…LGLI), and 350 to 372 (FITL…ALIL). The tract at residues 415–443 (GEDLPTTEPDVASEERGEGREIDSSRPVT) is disordered. Residues 427–443 (SEERGEGREIDSSRPVT) are compositionally biased toward basic and acidic residues.

Belongs to the dicarboxylate/amino acid:cation symporter (DAACS) (TC 2.A.23) family.

It localises to the cell membrane. Functionally, responsible for the transport of dicarboxylates such as succinate, fumarate, and malate across the membrane. The chain is C4-dicarboxylate transport protein (dctA) from Deinococcus radiodurans (strain ATCC 13939 / DSM 20539 / JCM 16871 / CCUG 27074 / LMG 4051 / NBRC 15346 / NCIMB 9279 / VKM B-1422 / R1).